A 172-amino-acid polypeptide reads, in one-letter code: 3-hydroxydecanoyl-[acyl-carrier-protein] dehydratase (172 aa).

His71 is an active-site residue.

The protein belongs to the thioester dehydratase family. FabA subfamily. As to quaternary structure, homodimer.

The protein localises to the cytoplasm. It catalyses the reaction a (3R)-hydroxyacyl-[ACP] = a (2E)-enoyl-[ACP] + H2O. The catalysed reaction is (3R)-hydroxydecanoyl-[ACP] = (2E)-decenoyl-[ACP] + H2O. The enzyme catalyses (2E)-decenoyl-[ACP] = (3Z)-decenoyl-[ACP]. The protein operates within lipid metabolism; fatty acid biosynthesis. Its function is as follows. Necessary for the introduction of cis unsaturation into fatty acids. Catalyzes the dehydration of (3R)-3-hydroxydecanoyl-ACP to E-(2)-decenoyl-ACP and then its isomerization to Z-(3)-decenoyl-ACP. Can catalyze the dehydratase reaction for beta-hydroxyacyl-ACPs with saturated chain lengths up to 16:0, being most active on intermediate chain length. The sequence is that of 3-hydroxydecanoyl-[acyl-carrier-protein] dehydratase from Blochmanniella pennsylvanica (strain BPEN).